The sequence spans 874 residues: Leucine--tRNA ligase (874 aa).

A 'HIGH' region motif is present at residues 47-57 (PYPSGKLHMGH). The 'KMSKS' region signature appears at 636 to 640 (KMSKS). Lysine 639 contacts ATP.

It belongs to the class-I aminoacyl-tRNA synthetase family.

The protein localises to the cytoplasm. It catalyses the reaction tRNA(Leu) + L-leucine + ATP = L-leucyl-tRNA(Leu) + AMP + diphosphate. The polypeptide is Leucine--tRNA ligase (Acinetobacter baumannii (strain AB307-0294)).